Consider the following 626-residue polypeptide: Chaperone protein HtpG (626 aa).

Positions 1–332 are a; substrate-binding; that stretch reads MTNNDTPGMR…TEDLPLNVSR (332 aa). A b region spans residues 333 to 546; sequence EVVQSSKVMA…KDSLDSSMEK (214 aa). Residues 547-626 form a c region; that stretch reads MMKMMHAEMP…ELIEAATMSR (80 aa).

It belongs to the heat shock protein 90 family. In terms of assembly, homodimer.

The protein resides in the cytoplasm. In terms of biological role, molecular chaperone. Has ATPase activity. The polypeptide is Chaperone protein HtpG (Chlorobium phaeobacteroides (strain DSM 266 / SMG 266 / 2430)).